Consider the following 428-residue polypeptide: MAGSLFADASKRLEKALKYVAISDDAGERLKYPKTSLSVSIPVRMDDGSLKIFPGYRVRYDDTRGPGKGGVRYHPNVTMDEVQSLAFWMTFKCALLNLPFGGAKGGITLNPKELSRAELERLSRGYIEAIADFIGPDIDILAPDVYTNEMMMGWMMDQYSIIRRKISPAVVTGKPVTMGGSQGRNTATGTGAFYIMQGMLPKFDQYPENTTVAVQGFGNAGMVVAECLYQDGYKVVAISDSQGGIYNEQGIDIPAVIDYKQRHRTLAGMYCDQAICDLGENQQISNAELLALDVDVLIPAALENQITRDNADQVRARYIFEVANGPTTTAADDILASKGIYVFPDILVNAGGVTVSYFEWVQNRSGLYWSAKEVNDRLKEKMVEEAEHVWNITQELDVNVRTAAYIHALNRLSEAMDAKGTRDYYQDS.

The substrate site is built by lysine 68 and lysine 92. Lysine 104 (proton donor) is an active-site residue. Positions 188 and 219 each coordinate NADP(+). A substrate-binding site is contributed by serine 356.

Belongs to the Glu/Leu/Phe/Val dehydrogenases family. As to quaternary structure, homohexamer.

The enzyme catalyses L-glutamate + NADP(+) + H2O = 2-oxoglutarate + NH4(+) + NADPH + H(+). Functionally, catalyzes the reversible oxidative deamination of glutamate to alpha-ketoglutarate and ammonia. In Synechocystis sp. (strain ATCC 27184 / PCC 6803 / Kazusa), this protein is NADP-specific glutamate dehydrogenase (gdhA).